Consider the following 504-residue polypeptide: Probable alpha-L-arabinofuranosidase C (504 aa).

Asn-152, Asn-181, Asn-269, and Asn-467 each carry an N-linked (GlcNAc...) asparagine glycan.

Belongs to the glycosyl hydrolase 51 family.

The protein localises to the secreted. It catalyses the reaction Hydrolysis of terminal non-reducing alpha-L-arabinofuranoside residues in alpha-L-arabinosides.. The protein operates within glycan metabolism; L-arabinan degradation. In terms of biological role, alpha-L-arabinofuranosidase involved in the degradation of arabinoxylan, a major component of plant hemicellulose. Acts only on small linear 1,5-alpha-linked L-arabinofuranosyl oligosaccharides. The sequence is that of Probable alpha-L-arabinofuranosidase C (abfC) from Aspergillus terreus (strain NIH 2624 / FGSC A1156).